Here is a 499-residue protein sequence, read N- to C-terminus: Lysine--tRNA ligase (499 aa).

Glutamate 407 and glutamate 414 together coordinate Mg(2+).

Belongs to the class-II aminoacyl-tRNA synthetase family. In terms of assembly, homodimer. Mg(2+) serves as cofactor.

The protein resides in the cytoplasm. It carries out the reaction tRNA(Lys) + L-lysine + ATP = L-lysyl-tRNA(Lys) + AMP + diphosphate. In Lactiplantibacillus plantarum (strain ATCC BAA-793 / NCIMB 8826 / WCFS1) (Lactobacillus plantarum), this protein is Lysine--tRNA ligase.